The following is a 443-amino-acid chain: D(2) dopamine receptor (443 aa).

The Extracellular segment spans residues 1 to 37; sequence MDPLNLSWYDDDLESQNWSRPFNGSEGKPGKPHYNYY. N-linked (GlcNAc...) asparagine glycosylation is found at asparagine 5, asparagine 17, and asparagine 23. A helical membrane pass occupies residues 38 to 60; the sequence is AMLLTLLIFIIVFGNVLVCMAVS. Residues 61–70 lie on the Cytoplasmic side of the membrane; that stretch reads REKALQTTTN. Residues 71 to 93 traverse the membrane as a helical segment; that stretch reads YLIVSLAVADLLVATLVMPWVVY. Topologically, residues 94–108 are extracellular; sequence LEVVGEWKFSRIHCD. A disulfide bridge links cysteine 107 with cysteine 182. The chain crosses the membrane as a helical span at residues 109-130; the sequence is IFVTLDVMMCTASILNLCAISI. Residues 131–151 lie on the Cytoplasmic side of the membrane; it reads DRYTAVAMPMLYNTRYSSKRR. Residues 152 to 172 form a helical membrane-spanning segment; sequence VTVMIAIVWVLSFTISCPLLF. The Extracellular portion of the chain corresponds to 173–188; that stretch reads GLNNTDQNECIIANPA. Residues 189 to 213 traverse the membrane as a helical segment; that stretch reads FVVYSSIVSFYVPFIVTLLVYIKIY. The tract at residues 211–373 is interaction with PPP1R9B; the sequence is KIYIVLRRRR…SQQKEKKATQ (163 aa). Residues 214–373 are Cytoplasmic-facing; it reads IVLRRRRKRV…SQQKEKKATQ (160 aa). The interval 282-332 is disordered; sequence EMLSSTSPPERTRYSPIPPSHHQLTLPDPSHHGLHSTADSPAKPEKNGHAK. Over residues 323–332 the composition is skewed to basic and acidic residues; that stretch reads AKPEKNGHAK. Residues 374–395 form a helical membrane-spanning segment; the sequence is MLAIVLGVFIICWLPFFITHIL. The Extracellular segment spans residues 396-409; the sequence is NIHCECNIPPVLYS. The cysteines at positions 399 and 401 are disulfide-linked. Residues 410 to 431 traverse the membrane as a helical segment; that stretch reads AFTWLGYVNSAVNPIIYTTFNI. The Cytoplasmic portion of the chain corresponds to 432-443; sequence EFRKAFLKILHC. The S-palmitoyl cysteine moiety is linked to residue cysteine 443.

Belongs to the G-protein coupled receptor 1 family. Forms homo- and heterooligomers with DRD4. The interaction with DRD4 may modulate agonist-induced downstream signaling. Interacts with CADPS and CADPS2. Interacts with GPRASP1, PPP1R9B and CLIC6. Interacts with ARRB2. Interacts with HTR2A. Interacts with DRD1. Interacts with KCNA2. Palmitoylated. Palmitoylation which is required for proper localization to the plasma membrane and stability of the receptor could be carried on by ZDHHC4, ZDHHC3 and ZDHHC8.

It localises to the cell membrane. The protein localises to the golgi apparatus membrane. Its function is as follows. Dopamine receptor whose activity is mediated by G proteins which inhibit adenylyl cyclase. Positively regulates postnatal regression of retinal hyaloid vessels via suppression of VEGFR2/KDR activity, downstream of OPN5. This is D(2) dopamine receptor (DRD2) from Canis lupus familiaris (Dog).